Consider the following 394-residue polypeptide: Elongation factor Tu 1 (394 aa).

In terms of domain architecture, tr-type G spans 10-204 (KPHVNVGTIG…ALDSYIPEPE (195 aa)). The segment at 19 to 26 (GHVDHGKT) is G1. 19–26 (GHVDHGKT) is a GTP binding site. Mg(2+) is bound at residue T26. The segment at 60–64 (GITIS) is G2. The G3 stretch occupies residues 81 to 84 (DCPG). GTP contacts are provided by residues 81–85 (DCPGH) and 136–139 (NKCD). Positions 136 to 139 (NKCD) are G4. Residues 174–176 (SAL) are G5.

This sequence belongs to the TRAFAC class translation factor GTPase superfamily. Classic translation factor GTPase family. EF-Tu/EF-1A subfamily. As to quaternary structure, monomer.

The protein localises to the cytoplasm. It catalyses the reaction GTP + H2O = GDP + phosphate + H(+). GTP hydrolase that promotes the GTP-dependent binding of aminoacyl-tRNA to the A-site of ribosomes during protein biosynthesis. The chain is Elongation factor Tu 1 from Photorhabdus laumondii subsp. laumondii (strain DSM 15139 / CIP 105565 / TT01) (Photorhabdus luminescens subsp. laumondii).